A 549-amino-acid chain; its full sequence is Tigger transposable element-derived protein 7 (549 aa).

The region spanning 1 to 52 is the HTH psq-type domain; it reads MNKRGKYTTLNLEEKMKVLSRIEAGRSLKSVMDEFGISKSTFYDIKKNKKLI. DNA-binding regions (H-T-H motif) lie at residues 28–48 and 101–132; these read LKSV…IKKN and VELQ…FRNR. Residues 68 to 139 form the HTH CENPB-type domain; it reads KRKRTTGAKY…RNRHAIGNRK (72 aa). The DDE-1 domain occupies 169 to 399; that stretch reads LCLAQLYSGD…VKQITIANAW (231 aa). Positions 527-549 are disordered; sequence FLKPRPHNIKDSFSGPSTSGSNH. Residues 540-549 are compositionally biased toward polar residues; sequence SGPSTSGSNH.

It belongs to the tigger transposable element derived protein family. In terms of tissue distribution, expressed in all tissues tested. Higher expression in testis and ovary.

It localises to the nucleus. This chain is Tigger transposable element-derived protein 7 (TIGD7), found in Homo sapiens (Human).